The chain runs to 694 residues: Polyribonucleotide nucleotidyltransferase (694 aa).

Asp-485 and Asp-491 together coordinate Mg(2+). The KH domain occupies 552–611 (PRIETMQIKPNKIATVIGPGGKQIRQIIEEAGVQIDINDSGLVSISASSPQAIEKAKSII). Positions 621-689 (GKIYEGRVTS…EKGQYKLSHK (69 aa)) constitute an S1 motif domain.

Belongs to the polyribonucleotide nucleotidyltransferase family. It depends on Mg(2+) as a cofactor.

The protein resides in the cytoplasm. It carries out the reaction RNA(n+1) + phosphate = RNA(n) + a ribonucleoside 5'-diphosphate. Its function is as follows. Involved in mRNA degradation. Catalyzes the phosphorolysis of single-stranded polyribonucleotides processively in the 3'- to 5'-direction. This chain is Polyribonucleotide nucleotidyltransferase, found in Chlamydia abortus (strain DSM 27085 / S26/3) (Chlamydophila abortus).